The chain runs to 59 residues: UPF0391 membrane protein Geob_0344 (59 aa).

2 consecutive transmembrane segments (helical) span residues 4-24 (WAAI…TGIA) and 33-53 (FLFI…ITAG).

The protein belongs to the UPF0391 family.

It localises to the cell membrane. The chain is UPF0391 membrane protein Geob_0344 from Geotalea daltonii (strain DSM 22248 / JCM 15807 / FRC-32) (Geobacter daltonii).